The sequence spans 256 residues: Nuclear shuttle protein (256 aa).

Positions 18-50 (VSRNQSSKRGTFVRRTDGKRRKGPSSKAHDEPK) are disordered. Residues 21-42 (NQSSKRGTFVRRTDGKRRKGPS) carry the Bipartite nuclear localization signal motif. Residues 81–96 (VLGKIEPNRSRSYIKL) carry the Nuclear localization signal motif. Residues 150–187 (EIFGARIHSHGNLAITPGLKDRYYVLHVLKRVLSVEKD) are interaction with Arabidopsis thaliana NSI protein.

This sequence belongs to the begomovirus nuclear shuttle protein family. As to quaternary structure, binds to single-stranded and double-stranded viral DNA. Interacts with the host nuclear shuttle interacting (NSI) protein. This interaction may allow NSP to recruit NSI monomers to the viral genome and thus regulate nuclear export of viral genome by NSP.

The protein resides in the host nucleus. It is found in the host cytoplasm. Its subcellular location is the host cell membrane. Its function is as follows. Binds to the genomic viral ssDNA, shuttles it into and out of the cell nucleus. Begomoviruses use 2 proteins to transport their DNA from cell to cell. The nuclear shuttle protein (NSP) shuttles it between nucleus and cytoplasm and the movement protein (MP) probably transports the DNA-NSP complex to the cell periphery and facilitates movement across the cell wall. This chain is Nuclear shuttle protein, found in Brassica oleracea (Wild cabbage).